The primary structure comprises 105 residues: Large ribosomal subunit protein uL24 (105 aa).

This sequence belongs to the universal ribosomal protein uL24 family. In terms of assembly, part of the 50S ribosomal subunit.

In terms of biological role, one of two assembly initiator proteins, it binds directly to the 5'-end of the 23S rRNA, where it nucleates assembly of the 50S subunit. Its function is as follows. One of the proteins that surrounds the polypeptide exit tunnel on the outside of the subunit. This is Large ribosomal subunit protein uL24 from Rhodospirillum centenum (strain ATCC 51521 / SW).